A 328-amino-acid polypeptide reads, in one-letter code: MIFSILEHILTHISFSVVSIVLTIYFLTLLVNLDEIIGFFDSSDKGIIITFFCITGLLFTRWIYSGHFPLSNLYESLIFLSWSFSIIHMVSYFNKKQQNHLNAITAPSAIFIQGFATSGLLNKMPQSAILVPALQSQWLMMHVSMMILGYGALLCGSLLSIALLVITFRKVGPTFWKKNIKKKFLLNELFSFDVLYYINERNSILLQQNINFSFSRNYYRYQLIQQLDFWSFRIISLGFIFLTVGILSGAVWANETWGSYWNWDPKETWAFITWTIFAIYLHIKTNRNVRDINSAIVASIGFLLIWICYFGVNLLGIGLHSYGSFTSN.

8 consecutive transmembrane segments (helical) span residues I13–L33, G46–G66, L73–F93, L101–L121, M146–I166, I234–N254, W263–I283, and A295–L315.

Belongs to the CcmF/CycK/Ccl1/NrfE/CcsA family. May interact with Ccs1.

It is found in the plastid. The protein resides in the chloroplast thylakoid membrane. Its function is as follows. Required during biogenesis of c-type cytochromes (cytochrome c6 and cytochrome f) at the step of heme attachment. This chain is Cytochrome c biogenesis protein CcsA, found in Capsella bursa-pastoris (Shepherd's purse).